The chain runs to 1940 residues: Myosin-1B (1940 aa).

The region spanning 33–82 is the Myosin N-terminal SH3-like domain; sequence DAKSSVFVVHAKESYVKSTIQSKESGKVTVKTEGGETLTVKEDQIFSMNP. The Myosin motor domain occupies 86 to 783; the sequence is DKIEDMAMMT…LLGLLEEMRD (698 aa). N6,N6,N6-trimethyllysine is present on Lys130. Residue 179-186 coordinates ATP; sequence GESGAGKT. Actin-binding regions lie at residues 660–682 and 762–776; these read LNKL…IPNE and KFGH…GLLG. One can recognise an IQ domain in the interval 786-815; the sequence is LAQLITRTQARCRGFLMRVEFKKMMERRES. Residues 844-1940 adopt a coiled-coil conformation; sequence LLKSAESEKE…EIGKKAESEE (1097 aa). Residues 1912–1940 are disordered; that stretch reads EERADIAESQVNKLRAKSREIGKKAESEE. Positions 1928–1940 are enriched in basic and acidic residues; the sequence is KSREIGKKAESEE.

This sequence belongs to the TRAFAC class myosin-kinesin ATPase superfamily. Myosin family. As to quaternary structure, muscle myosin is a hexameric protein that consists of 2 heavy chain subunits (MHC), 2 alkali light chain subunits (MLC) and 2 regulatory light chain subunits (MLC-2).

It is found in the cytoplasm. Its subcellular location is the myofibril. Functionally, muscle contraction. In Gallus gallus (Chicken), this protein is Myosin-1B (MYH1B).